The chain runs to 503 residues: Ent-kaurene oxidase-like 5 (503 aa).

Residues 8-28 (GAGGIGVAAAAAVVAATLAVV) traverse the membrane as a helical segment. C448 contributes to the heme binding site.

This sequence belongs to the cytochrome P450 family. Heme is required as a cofactor. Expressed in roots.

Its subcellular location is the membrane. Its function is as follows. May hydroxylate diterpenes. The protein is Ent-kaurene oxidase-like 5 of Oryza sativa subsp. japonica (Rice).